Reading from the N-terminus, the 100-residue chain is UPF0213 protein YhbQ (100 aa).

Residues 2–77 enclose the GIY-YIG domain; it reads TPWFLYLIRT…KQLTKRQKER (76 aa).

It belongs to the UPF0213 family.

In Escherichia coli O157:H7, this protein is UPF0213 protein YhbQ.